The following is a 274-amino-acid chain: 2-dehydro-3-deoxyphosphooctonate aldolase (274 aa).

The protein belongs to the KdsA family.

It is found in the cytoplasm. It carries out the reaction D-arabinose 5-phosphate + phosphoenolpyruvate + H2O = 3-deoxy-alpha-D-manno-2-octulosonate-8-phosphate + phosphate. Its pathway is carbohydrate biosynthesis; 3-deoxy-D-manno-octulosonate biosynthesis; 3-deoxy-D-manno-octulosonate from D-ribulose 5-phosphate: step 2/3. It participates in bacterial outer membrane biogenesis; lipopolysaccharide biosynthesis. The sequence is that of 2-dehydro-3-deoxyphosphooctonate aldolase from Rickettsia conorii (strain ATCC VR-613 / Malish 7).